The following is a 359-amino-acid chain: tRNA-specific 2-thiouridylase MnmA (359 aa).

Residues 9–16 (GISGGVDS) and Met35 contribute to the ATP site. The segment at 95–97 (NPD) is interaction with target base in tRNA. Cys100 functions as the Nucleophile in the catalytic mechanism. Cys100 and Cys197 are oxidised to a cystine. Gly124 is an ATP binding site. The segment at 147-149 (KDQ) is interaction with tRNA. The active-site Cysteine persulfide intermediate is Cys197. An interaction with tRNA region spans residues 309–310 (RY).

This sequence belongs to the MnmA/TRMU family.

Its subcellular location is the cytoplasm. It catalyses the reaction S-sulfanyl-L-cysteinyl-[protein] + uridine(34) in tRNA + AH2 + ATP = 2-thiouridine(34) in tRNA + L-cysteinyl-[protein] + A + AMP + diphosphate + H(+). Its function is as follows. Catalyzes the 2-thiolation of uridine at the wobble position (U34) of tRNA, leading to the formation of s(2)U34. This chain is tRNA-specific 2-thiouridylase MnmA, found in Francisella tularensis subsp. tularensis (strain FSC 198).